Reading from the N-terminus, the 270-residue chain is CASP-like protein 4A1 (270 aa).

The segment at 1-110 is disordered; it reads MEELEKTQKF…PSFSSSSSTP (110 aa). At 1–121 the chain is on the cytoplasmic side; it reads MEELEKTQKF…ESKWASLIRK (121 aa). A compositionally biased stretch (polar residues) spans 24 to 66; the sequence is SSPINFEMSSRSSLHSLPQTTIESPPDSPTLSSIPDSHGSSPH. A compositionally biased stretch (basic and acidic residues) spans 85-97; that stretch reads NGEEEKKVSESRR. Residues 100–110 are compositionally biased toward low complexity; the sequence is RPSFSSSSSTP. The helical transmembrane segment at 122-142 threads the bilayer; it reads ALLGFRVIAFVSCLVSFSVMV. At 143-161 the chain is on the extracellular side; it reads SDRDKGWAHDSFYNYKEFR. Residues 162–182 form a helical membrane-spanning segment; the sequence is FCLAANVIGFVYSGFMICDLV. The Cytoplasmic segment spans residues 183–198; it reads YLLSTSIRRSRHNLRH. The chain crosses the membrane as a helical span at residues 199–221; sequence FLEFGLDQMLAYLLASASTSASI. Topologically, residues 222 to 246 are extracellular; sequence RVDDWQSNWGADKFPDLARASVALS. A helical membrane pass occupies residues 247 to 267; the sequence is YVSFVAFAFCSLASGYALCAL. The Cytoplasmic segment spans residues 268-270; it reads RSI.

This sequence belongs to the Casparian strip membrane proteins (CASP) family. Homodimer and heterodimers.

It localises to the cell membrane. This is CASP-like protein 4A1 from Arabidopsis thaliana (Mouse-ear cress).